A 119-amino-acid chain; its full sequence is Ribonuclease P protein component (119 aa).

The protein belongs to the RnpA family. As to quaternary structure, consists of a catalytic RNA component (M1 or rnpB) and a protein subunit.

It catalyses the reaction Endonucleolytic cleavage of RNA, removing 5'-extranucleotides from tRNA precursor.. RNaseP catalyzes the removal of the 5'-leader sequence from pre-tRNA to produce the mature 5'-terminus. It can also cleave other RNA substrates such as 4.5S RNA. The protein component plays an auxiliary but essential role in vivo by binding to the 5'-leader sequence and broadening the substrate specificity of the ribozyme. The protein is Ribonuclease P protein component of Bacillus cereus (strain ZK / E33L).